The following is a 394-amino-acid chain: MPDKFKRVHVVVMDSVGIGEAPDAAKFGDFDVDTFGHIAKHVGGLKMPEMGKLGLSNIREIDGIKKAEKPLAYYTKMQEASNGKDTMTGHWEIMGLYIDTPFRVFPDGFPDDLINQIEEKTGRKVIGNKPASGTEIMAELGEEHVKTGALIVYTSADSVLQIAAHEDVVPLEELYEICEFCRKITLDDPYMLGRIIARPFVGEPGAFVRTPNRHDYALKPFKPTVMDALKDGGKDVIAIGKISDIFDGEGVTESIRTKSNMDGMDQFIAVLDKDFNGMSFLNLVDFDALFGHRRDPQGYADALVDFDGRLVEVMEKLTDDDLLIITADHGNDPTYSGTDHTREFVPLLVYSPRFKNGGSELELRKTFADLGATVADNFEVKMPEYGTSFLKDLK.

The Mn(2+) site is built by Asp14, Asp287, His292, Asp328, His329, and His340.

This sequence belongs to the phosphopentomutase family. The cofactor is Mn(2+).

It localises to the cytoplasm. It carries out the reaction 2-deoxy-alpha-D-ribose 1-phosphate = 2-deoxy-D-ribose 5-phosphate. The enzyme catalyses alpha-D-ribose 1-phosphate = D-ribose 5-phosphate. It participates in carbohydrate degradation; 2-deoxy-D-ribose 1-phosphate degradation; D-glyceraldehyde 3-phosphate and acetaldehyde from 2-deoxy-alpha-D-ribose 1-phosphate: step 1/2. In terms of biological role, isomerase that catalyzes the conversion of deoxy-ribose 1-phosphate (dRib-1-P) and ribose 1-phosphate (Rib-1-P) to deoxy-ribose 5-phosphate (dRib-5-P) and ribose 5-phosphate (Rib-5-P), respectively. The chain is Phosphopentomutase from Listeria monocytogenes serotype 4b (strain CLIP80459).